We begin with the raw amino-acid sequence, 460 residues long: MSLINPKVSAMFFDQIVTATDHNIAWEKIQNLLYNLYGEATYNSWLSSLKFVSSSNGEVLLSVPTRFIKEWITVHYMEKILLLWQNEDKSICSIDIQVTEEKNSSSSIISKNKEESVNNLGSPLDPRFTFDNFVVGKPNELAFTAAKRVAESIDPIPGSNPLFLYGGVGLGKTHLMHAIAWHIVNSPSAKRKVVYLSAEKFMYQYITALRSKDIMLFKEQFRSVDVLMVDDVQFISGKDSTQEEFFHTFNALIDQNKQLVISADRSPSDLDGVEERIKSRLGWGLVADINETTFELRLGILQAKVEQMNMYVPQDVLEFLARNIRSNIRELEGALNKVAHTSLIGRSMTVESASETLMDLLRSNHRSITIAEIQKKIAEFFNIKVTDMHSNRRLRSLVRPRQIAMYFAKKFTHKSLPDIGRSFGGRDHATVIHAVKQIENFIKTDSEFADEINQLRKMFK.

Residues 1-91 (MSLINPKVSA…LLWQNEDKSI (91 aa)) form a domain I, interacts with DnaA modulators region. The interval 91–122 (ICSIDIQVTEEKNSSSSIISKNKEESVNNLGS) is domain II. The domain III, AAA+ region stretch occupies residues 123–342 (PLDPRFTFDN…GALNKVAHTS (220 aa)). Residues G169, G171, K172, and T173 each contribute to the ATP site. Residues 343–460 (LIGRSMTVES…EINQLRKMFK (118 aa)) are domain IV, binds dsDNA.

The protein belongs to the DnaA family. Oligomerizes as a right-handed, spiral filament on DNA at oriC.

The protein localises to the cytoplasm. In terms of biological role, plays an essential role in the initiation and regulation of chromosomal replication. ATP-DnaA binds to the origin of replication (oriC) to initiate formation of the DNA replication initiation complex once per cell cycle. Binds the DnaA box (a 9 base pair repeat at the origin) and separates the double-stranded (ds)DNA. Forms a right-handed helical filament on oriC DNA; dsDNA binds to the exterior of the filament while single-stranded (ss)DNA is stabiized in the filament's interior. The ATP-DnaA-oriC complex binds and stabilizes one strand of the AT-rich DNA unwinding element (DUE), permitting loading of DNA polymerase. After initiation quickly degrades to an ADP-DnaA complex that is not apt for DNA replication. Binds acidic phospholipids. The protein is Chromosomal replication initiator protein DnaA of Wolbachia sp. subsp. Brugia malayi (strain TRS).